The primary structure comprises 1142 residues: Fibronectin type-III domain-containing protein 3A (1142 aa).

The tract at residues 104-191 is disordered; the sequence is YGDVDAHSTH…KSGKGKGGTQ (88 aa). Basic and acidic residues predominate over residues 107–145; the sequence is VDAHSTHGRSNFRDERSSKTYERLQKKLKDRQGTQKDKM. Residues 146-158 show a composition bias toward low complexity; it reads SSPPSSPQKCPSP. Ser-147, Ser-151, and Ser-157 each carry phosphoserine. Fibronectin type-III domains follow at residues 212-313, 317-409, 413-506, 510-604, 608-701, 705-795, 805-894, 895-989, and 990-1095; these read NIVK…TLSC, IPNP…TSGC, MPAS…TCPD, IPVK…TPAV, PCLP…TAPG, QCKP…TPPS, EISD…TKPL, PPDP…TPKS, and VPAA…TEPP. Lys-328 bears the N6-acetyllysine mark. The helical transmembrane segment at 1121–1141 threads the bilayer; that stretch reads NLVLFAFFSILIAFIIQYFVI.

Belongs to the FNDC3 family.

It localises to the golgi apparatus membrane. Its function is as follows. Mediates spermatid-Sertoli adhesion during spermatogenesis. This is Fibronectin type-III domain-containing protein 3A (FNDC3A) from Pongo abelii (Sumatran orangutan).